A 499-amino-acid chain; its full sequence is Protein nucleotidyltransferase YdiU (499 aa).

ATP is bound by residues Gly95, Gly97, Arg98, Lys117, Asp129, Gly130, Arg180, and Arg187. The active-site Proton acceptor is the Asp256. Mg(2+) is bound by residues Asn257 and Asp266. Residue Asp266 participates in ATP binding.

The protein belongs to the SELO family. Mg(2+) serves as cofactor. Requires Mn(2+) as cofactor.

It catalyses the reaction L-seryl-[protein] + ATP = 3-O-(5'-adenylyl)-L-seryl-[protein] + diphosphate. The enzyme catalyses L-threonyl-[protein] + ATP = 3-O-(5'-adenylyl)-L-threonyl-[protein] + diphosphate. The catalysed reaction is L-tyrosyl-[protein] + ATP = O-(5'-adenylyl)-L-tyrosyl-[protein] + diphosphate. It carries out the reaction L-histidyl-[protein] + UTP = N(tele)-(5'-uridylyl)-L-histidyl-[protein] + diphosphate. It catalyses the reaction L-seryl-[protein] + UTP = O-(5'-uridylyl)-L-seryl-[protein] + diphosphate. The enzyme catalyses L-tyrosyl-[protein] + UTP = O-(5'-uridylyl)-L-tyrosyl-[protein] + diphosphate. Its function is as follows. Nucleotidyltransferase involved in the post-translational modification of proteins. It can catalyze the addition of adenosine monophosphate (AMP) or uridine monophosphate (UMP) to a protein, resulting in modifications known as AMPylation and UMPylation. This is Protein nucleotidyltransferase YdiU from Dechloromonas aromatica (strain RCB).